Here is a 1333-residue protein sequence, read N- to C-terminus: Partitioning defective 3 homolog (1333 aa).

Ser25 carries the phosphoserine modification. Thr91 carries the post-translational modification Phosphothreonine. The interval Ser143 to Asn262 is disordered. Polar residues-rich tracts occupy residues Gly150–Glu163 and Thr171–Ser187. Residues Ser156 and Ser174 each carry the phosphoserine modification. The span at Thr190–Pro203 shows a compositional bias: basic and acidic residues. Residues Ser207–Ala224 are compositionally biased toward polar residues. The region spanning Met271–Pro359 is the PDZ 1 domain. Disordered regions lie at residues Leu369–Cys388 and Asn397–Ser441. A Phosphoserine modification is found at Ser383. PDZ domains follow at residues Asn461–Arg546 and Glu590–Gln677. The residue at position 489 (Tyr489) is a Phosphotyrosine. A phosphoserine mark is found at Ser692, Ser695, Ser715, Ser728, Ser806, and Ser824. Interaction with PRKCI and PRKCZ regions lie at residues Arg712–Pro932 and Arg712–Asp936. The residue at position 831 (Lys831) is an N6-acetyllysine. Ser834 carries the phosphoserine modification. Position 848 is an N6-acetyllysine (Lys848). Phosphoserine occurs at positions 849 and 869. Disordered stretches follow at residues Thr861 to Ser884, Ser928 to Gly1011, Lys1024 to Ala1071, Pro1110 to His1267, and Gln1283 to Ser1333. Lys881 bears the N6-acetyllysine mark. The interaction with FRMD4A stretch occupies residues Lys931 to Ser1333. Positions Asp935–Glu949 are enriched in acidic residues. Ser958 bears the Phosphoserine; by AURKA mark. Residues Ser967 and Ser969 each carry the phosphoserine modification. 2 stretches are compositionally biased toward basic and acidic residues: residues Asp977–Lys1005 and Arg1026–Ile1039. Ser1042 is modified (phosphoserine). A compositionally biased stretch (basic and acidic residues) spans Glu1046–Ala1071. Positions Glu1046 to Glu1078 form a coiled coil. The segment covering Pro1134–Ser1143 has biased composition (polar residues). The span at Asn1144–Tyr1171 shows a compositional bias: basic and acidic residues. 3 coiled-coil regions span residues His1145–Arg1168, Val1195–Leu1218, and Met1274–Gln1295. Residues Ser1176 to Arg1199 show a composition bias toward low complexity. Polar residues predominate over residues Tyr1215–Gln1236. The segment covering Gln1283 to Leu1292 has biased composition (basic and acidic residues). Residues Ser1314–Gln1323 are compositionally biased toward polar residues. Residues Thr1324–Ser1333 are compositionally biased toward basic and acidic residues. Lys1327 is subject to N6-acetyllysine.

It belongs to the PAR3 family. In terms of assembly, interacts with PRCKI and CDH5. Interacts (via PDZ 3 domain) with PTEN (via C-terminus). Component of a complex whose core is composed of ARHGAP17, AMOT, PALS1, PATJ and PARD3/PAR3. Interacts with LIMK2, AURKA and AURKB. Component of the Par polarity complex, composed of at least phosphorylated PRKCZ, PARD3 and TIAM1. Interacts with ECT2 and FBF1. Interacts (via PDZ 1 domain) with F11R/JAM1, PARD6A and PARD6B. Part of a complex with PARD6A or PARD6B, PRKCI or PRKCZ and CDC42 or RAC1. Directly interacts with TIAM1 and TIAM2. Interacts with SIRT2. Interacts (via coiled-coil domain) with FRMD4A. Found in a complex with PARD3, CYTH1 and FRMD4A. Interacts with SAPCD2. Interacts with PRKCA. As to quaternary structure, interacts with PRKCZ. Acetylated. Deacetylated by SIRT2, thereby inhibiting Schwann cell peripheral myelination. In terms of processing, phosphorylation at Ser-824 by PRKCZ and PRKCI occurs at the most apical tip of epithelial cell-cell contacts during the initial phase of tight junction formation and may promote dissociation of the complex with PARD6. EGF-induced Tyr-1123 phosphorylation mediates dissociation from LIMK2. Phosphorylation by AURKA at Ser-958 is required for the normal establishment of neuronal polarity. Isoform 4 and isoform 5 are phosphorylated during oocyte maturation. As to expression, all isoforms are expressed in heart, while expression in brain is mainly limited to isoform 1, and to isoform 3 to a weaker level.

Its subcellular location is the cytoplasm. The protein resides in the endomembrane system. It localises to the cell junction. It is found in the tight junction. The protein localises to the adherens junction. Its subcellular location is the cell cortex. The protein resides in the cytoskeleton. It localises to the cell membrane. Its function is as follows. Adapter protein involved in asymmetrical cell division and cell polarization processes. Seems to play a central role in the formation of epithelial tight junctions. Targets the phosphatase PTEN to cell junctions. Association with PARD6B may prevent the interaction of PARD3 with F11R/JAM1, thereby preventing tight junction assembly. The PARD6-PARD3 complex links GTP-bound Rho small GTPases to atypical protein kinase C proteins. Required for establishment of neuronal polarity and normal axon formation in cultured hippocampal neurons. Involved in Schwann cell peripheral myelination. In Mus musculus (Mouse), this protein is Partitioning defective 3 homolog (Pard3).